Consider the following 110-residue polypeptide: MTTRRIIGQDGEEKTYLDVDPRGPPGPSNISPAVPASVIWKLMSFTFAMITLPIGTYFFTVNYVFGGNATYAGALAAIMANVVLIAYVIMAFKDDQAEQAEDAREAKKEL.

Residues 1 to 28 form a disordered region; it reads MTTRRIIGQDGEEKTYLDVDPRGPPGPS. The Cytoplasmic segment spans residues 1–44; that stretch reads MTTRRIIGQDGEEKTYLDVDPRGPPGPSNISPAVPASVIWKLMS. A compositionally biased stretch (basic and acidic residues) spans 11–21; it reads GEEKTYLDVDP. A helical transmembrane segment spans residues 45 to 65; that stretch reads FTFAMITLPIGTYFFTVNYVF. Residues 66–71 are Lumenal-facing; it reads GGNATY. Residues 72–92 form a helical membrane-spanning segment; sequence AGALAAIMANVVLIAYVIMAF. Over 93–110 the chain is Cytoplasmic; sequence KDDQAEQAEDAREAKKEL. A Prevents secretion from ER motif is present at residues 107-110; it reads KKEL.

It belongs to the VMA21 family.

It is found in the endoplasmic reticulum membrane. Its subcellular location is the endoplasmic reticulum-Golgi intermediate compartment membrane. The protein resides in the cytoplasmic vesicle. It localises to the COPII-coated vesicle membrane. Functionally, required for the assembly of the V0 complex of the vacuolar ATPase (V-ATPase) in the endoplasmic reticulum. The protein is Vacuolar ATPase assembly integral membrane protein VMA21 of Phaeosphaeria nodorum (strain SN15 / ATCC MYA-4574 / FGSC 10173) (Glume blotch fungus).